We begin with the raw amino-acid sequence, 319 residues long: MKKKKIGLLVMAYGTPESLEDVEAYYTHIRHGRKPSEEALQDLIGRYKAIGGISPLAKITKEQAHKLTDSMNNMFTEYEFNCYLGLKHTAPFIEDAVEEMKRDGIEQAISIVLAPHYSTFSIKAYNERAIRLSEEIGGPVIEPIDQWYDEPKFISYWADQIKETFTKIEDKEKAVVIFSAHSLPEKIIAAGDPYVEQLQHTADLIAAAANIQNYTIGWQSAGNTSDPWIGPDVQDLTRELFEEHRYEAFIYCPVGFVAEHLEVLYDNDYECKVVTDELNAAYFRPNMPNAQSTFIDCLATIVSKKMKEIVDKELILNNN.

Fe-coproporphyrin III-binding positions include Tyr-13, Arg-30, 46-47 (RY), Ser-54, and Tyr-125. 2 residues coordinate Fe(2+): His-181 and Glu-262.

Belongs to the ferrochelatase family.

The protein localises to the cytoplasm. It carries out the reaction Fe-coproporphyrin III + 2 H(+) = coproporphyrin III + Fe(2+). It participates in porphyrin-containing compound metabolism; protoheme biosynthesis. Its function is as follows. Involved in coproporphyrin-dependent heme b biosynthesis. Catalyzes the insertion of ferrous iron into coproporphyrin III to form Fe-coproporphyrin III. In Bacillus cereus (strain ZK / E33L), this protein is Coproporphyrin III ferrochelatase 2.